Consider the following 130-residue polypeptide: Holo-[acyl-carrier-protein] synthase (130 aa).

Positions 9 and 58 each coordinate Mg(2+).

The protein belongs to the P-Pant transferase superfamily. AcpS family. The cofactor is Mg(2+).

It is found in the cytoplasm. It catalyses the reaction apo-[ACP] + CoA = holo-[ACP] + adenosine 3',5'-bisphosphate + H(+). Functionally, transfers the 4'-phosphopantetheine moiety from coenzyme A to a Ser of acyl-carrier-protein. The protein is Holo-[acyl-carrier-protein] synthase of Mycolicibacterium smegmatis (strain ATCC 700084 / mc(2)155) (Mycobacterium smegmatis).